Here is a 122-residue protein sequence, read N- to C-terminus: Cofilin-5 (122 aa).

Residues 3–122 enclose the ADF-H domain; that stretch reads SRIIEIDPNC…VKDLIQLSNL (120 aa).

The protein belongs to the actin-binding proteins ADF family.

It localises to the cytoplasm. It is found in the cytoskeleton. In terms of biological role, controls actin polymerization and depolymerization. The sequence is that of Cofilin-5 (cofF) from Dictyostelium discoideum (Social amoeba).